Reading from the N-terminus, the 389-residue chain is Cell wall mannoprotein HSP150 (389 aa).

The N-terminal stretch at 1–18 (MQYKKTLVASALAATTLA) is a signal peptide. Positions 19-72 (AYAPSEPWSTLTPTATYSGGVTDYASTFGIAVQPISTTSSASSAATTASSKAKR) are excised as a propeptide. PIR1/2/3 repeat units lie at residues 71–89 (KRAA…TTTA), 97–115 (AAAV…TKTT), 116–134 (AAAV…TKTT), 140–158 (AAAV…TTTL), 164–182 (AAAV…TKTT), 183–201 (AAAV…TKTT), 202–220 (AAAV…TKTT), 221–239 (AAAV…TKTT), 240–257 (AAAV…TTKT), and 258–276 (TQAA…TATS).

The protein belongs to the PIR protein family. In terms of processing, covalently linked to beta-1,3-glucan of the inner cell wall layer via an alkali-sensitive ester linkage between the gamma-carboxyl group of glutamic acids, arising from specific glutamines within the PIR1/2/3 repeats, and hydroxyl groups of glucoses of beta-1,3-glucan chains. The propeptide is cleaved off in the late Golgi. While both peptides are secreted, only a fraction of the mature glycoprotein is incorporated into the cell wall. Post-translationally, O-glycosylated. Extensively O-mannosylated.

It is found in the secreted. The protein resides in the cell wall. Functionally, component of the outer cell wall layer. Required for stability of the cell wall and for optimal growth. Required for resistance against several antifungal and cell wall-perturbing agents and for tolerance to heat shock. This chain is Cell wall mannoprotein HSP150 (HSP150), found in Saccharomyces cerevisiae (strain YJM789) (Baker's yeast).